The following is a 255-amino-acid chain: Electron transfer flavoprotein beta subunit lysine methyltransferase (255 aa).

A mitochondrion-targeting transit peptide spans methionine 1–valine 32.

It belongs to the methyltransferase superfamily. ETFBKMT family. In terms of assembly, interacts with HSPD1; this protein may possibly be a methylation substrate.

It is found in the cytoplasm. It localises to the mitochondrion matrix. The catalysed reaction is L-lysyl-[protein] + 3 S-adenosyl-L-methionine = N(6),N(6),N(6)-trimethyl-L-lysyl-[protein] + 3 S-adenosyl-L-homocysteine + 3 H(+). Protein-lysine methyltransferase that selectively trimethylates the flavoprotein ETFB in mitochondria. Thereby, may negatively regulate the function of ETFB in electron transfer from Acyl-CoA dehydrogenases to the main respiratory chain. The protein is Electron transfer flavoprotein beta subunit lysine methyltransferase of Rattus norvegicus (Rat).